The sequence spans 106 residues: Flagellar transcriptional regulator FlhD (106 aa).

Belongs to the FlhD family. In terms of assembly, homodimer; disulfide-linked. Forms a heterohexamer composed of two FlhC and four FlhD subunits. Each FlhC binds a FlhD dimer, forming a heterotrimer, and a hexamer assembles by dimerization of two heterotrimers.

The protein localises to the cytoplasm. Functions in complex with FlhC as a master transcriptional regulator that regulates transcription of several flagellar and non-flagellar operons by binding to their promoter region. Activates expression of class 2 flagellar genes, including fliA, which is a flagellum-specific sigma factor that turns on the class 3 genes. Also regulates genes whose products function in a variety of physiological pathways. The chain is Flagellar transcriptional regulator FlhD from Burkholderia mallei (strain SAVP1).